The chain runs to 458 residues: UDP-N-acetylmuramoylalanine--D-glutamate ligase (458 aa).

Gly124–Thr130 serves as a coordination point for ATP.

Belongs to the MurCDEF family.

The protein localises to the cytoplasm. It catalyses the reaction UDP-N-acetyl-alpha-D-muramoyl-L-alanine + D-glutamate + ATP = UDP-N-acetyl-alpha-D-muramoyl-L-alanyl-D-glutamate + ADP + phosphate + H(+). The protein operates within cell wall biogenesis; peptidoglycan biosynthesis. Its function is as follows. Cell wall formation. Catalyzes the addition of glutamate to the nucleotide precursor UDP-N-acetylmuramoyl-L-alanine (UMA). In Clostridium botulinum (strain Okra / Type B1), this protein is UDP-N-acetylmuramoylalanine--D-glutamate ligase.